Reading from the N-terminus, the 222-residue chain is PKHD-type hydroxylase Syncc9605_1577 (222 aa).

Residues 80 to 175 (KVHSLLVSRS…RYVCVGWIES (96 aa)) enclose the Fe2OG dioxygenase domain. 3 residues coordinate Fe cation: His-98, Asp-100, and His-156. Position 166 (Arg-166) interacts with 2-oxoglutarate.

Fe(2+) serves as cofactor. It depends on L-ascorbate as a cofactor.

The protein is PKHD-type hydroxylase Syncc9605_1577 of Synechococcus sp. (strain CC9605).